A 655-amino-acid chain; its full sequence is p-hydroxybenzoic acid efflux pump subunit AaeB (655 aa).

The next 11 helical transmembrane spans lie at 13–33 (FAVK…HFQL), 38–58 (WAVL…GGEP), 69–89 (LRII…IAMI), 93–113 (LLMI…SSLV), 121–141 (WGLA…EPLL), 152–172 (EIVI…PRSI), 370–390 (LFWL…IAVV), 407–427 (FIYG…VIIP), 431–451 (QSML…GIEV), 459–479 (MGAL…TFHF), and 482–502 (FLDS…VILL).

This sequence belongs to the aromatic acid exporter ArAE (TC 2.A.85) family.

The protein localises to the cell inner membrane. Forms an efflux pump with AaeA. Could function as a metabolic relief valve, allowing to eliminate certain compounds when they accumulate to high levels in the cell. The sequence is that of p-hydroxybenzoic acid efflux pump subunit AaeB from Escherichia coli O6:K15:H31 (strain 536 / UPEC).